A 65-amino-acid polypeptide reads, in one-letter code: Large ribosomal subunit protein bL35 (65 aa).

Belongs to the bacterial ribosomal protein bL35 family.

This Methylobacillus flagellatus (strain ATCC 51484 / DSM 6875 / VKM B-1610 / KT) protein is Large ribosomal subunit protein bL35.